The chain runs to 1068 residues: WD repeat-containing protein on Y chromosome (1068 aa).

7 WD repeats span residues 155-199 (DEVT…IRTA), 201-242 (SESI…RGPF), 322-361 (RIPLGVSTFFVAESHNIVVTGGPDTFVRIWDVYIPTEPSA), 365-404 (GHNGGIVLVFVQPEENKVYSVDYQKIIKVWDLHEHTLLQT), 455-494 (THAAPVSVVLYNRLFRNVVSCGLDSYIIVWDPWTGRRKII), 507-546 (IIDIEITAACFDPLEQFLLTGARDGSLKIWNYNNAVVVRN), and 594-634 (FHTD…RRYS). Residues 657 to 687 (SKRLASRPTPGNHGLQMGRAGRSTVLNRPED) form a disordered region. WD repeat units follow at residues 746-785 (KTGDCVLTMCTDRKNRYLYTGTAFGYIKVWHIENFCVPET) and 829-868 (GHLKAINSISFINLPKIIFTGSHDYSCRLWTQGGRYLGTL). Residues 1026-1068 (SAINIKQPSRRRSDKTNDTRNVRTPRARDLIALEMSSSHASQS) are disordered. Residues 1039 to 1056 (DKTNDTRNVRTPRARDLI) are compositionally biased toward basic and acidic residues.

In Drosophila yakuba (Fruit fly), this protein is WD repeat-containing protein on Y chromosome.